Reading from the N-terminus, the 110-residue chain is Nucleoid-associated protein Sfum_2790 (110 aa).

Belongs to the YbaB/EbfC family. As to quaternary structure, homodimer.

The protein localises to the cytoplasm. It is found in the nucleoid. Functionally, binds to DNA and alters its conformation. May be involved in regulation of gene expression, nucleoid organization and DNA protection. The protein is Nucleoid-associated protein Sfum_2790 of Syntrophobacter fumaroxidans (strain DSM 10017 / MPOB).